A 309-amino-acid chain; its full sequence is Dehydrogenase/reductase SDR family member 7B (309 aa).

Residues 1-5 lie on the Cytoplasmic side of the membrane; the sequence is MERAL. A helical; Signal-anchor for type II membrane protein membrane pass occupies residues 6-26; it reads GVGIGPLAAGTVGLLILLKVI. At 27–271 the chain is on the lumenal side; sequence QRLRRRPNIQ…LKAVCQKKKD (245 aa). NAD(+) is bound by residues S47 and L49. S179 is a substrate binding site. Residues Y192, K196, and T227 each coordinate NAD(+). The active-site Proton acceptor is the Y192.

Belongs to the short-chain dehydrogenases/reductases (SDR) family.

It is found in the endoplasmic reticulum membrane. Functionally, putative oxidoreductase. This chain is Dehydrogenase/reductase SDR family member 7B (dhrs7b), found in Danio rerio (Zebrafish).